A 165-amino-acid chain; its full sequence is Lipoprotein signal peptidase (165 aa).

The next 4 helical transmembrane spans lie at 7–27 (YFSS…LVLL), 46–66 (AVTS…FSFL), 72–92 (WQRY…IYLL), and 100–120 (LFCW…IDRV). Active-site residues include Asp127 and Asp145. The helical transmembrane segment at 136-156 (WHWPAFNIADSAICIGAVLFI) threads the bilayer.

This sequence belongs to the peptidase A8 family.

The protein resides in the cell inner membrane. It carries out the reaction Release of signal peptides from bacterial membrane prolipoproteins. Hydrolyzes -Xaa-Yaa-Zaa-|-(S,diacylglyceryl)Cys-, in which Xaa is hydrophobic (preferably Leu), and Yaa (Ala or Ser) and Zaa (Gly or Ala) have small, neutral side chains.. The protein operates within protein modification; lipoprotein biosynthesis (signal peptide cleavage). Its function is as follows. This protein specifically catalyzes the removal of signal peptides from prolipoproteins. In Janthinobacterium sp. (strain Marseille) (Minibacterium massiliensis), this protein is Lipoprotein signal peptidase.